Consider the following 122-residue polypeptide: Histone H2B subacrosomal variant (122 aa).

The span at 1-25 shows a compositional bias: basic residues; the sequence is MARNVTKRNKRCRGHQKAIYKKKSH. The segment at 1 to 30 is disordered; it reads MARNVTKRNKRCRGHQKAIYKKKSHSSSES.

The protein belongs to the histone H2B family. In terms of tissue distribution, testis-specific. Restricted to the spermatid population of seminiferous epithelium. Not present in Sertoli cells, spermatogonia, spermatocytes or cells of the interstitial tissue (at protein level).

The protein localises to the cytoplasm. Its function is as follows. May act as an acrosome-nuclear docking protein in sperm. This is Histone H2B subacrosomal variant (SUBH2BV) from Bos taurus (Bovine).